Reading from the N-terminus, the 464-residue chain is MSYFTREKHELTAATPWEKTVAKMLSPFNRFMNSANGSGILLVFLTIVALVFANTSCREWYERVLNQQLLVQMGSFKIDMTIHYWINDALMTLFFLMVGLEIKYEMKVGRLASLKRAVLPIFAALGGMIVPALIYFSFNSQGETVSGWGIPMATDIAFAIAILLLLKGKVSPSLTAVLVALAIVDDLGAVIVIAIFYTDNLAWSPLIAAFLCFAVLLLLNRGGIRALWAYIAIGSLMWVFMLFSGVHATVAGVLTALATPMNAVYSPTEFSTQARQLLDEFDAHPDSKTQVAHSRELNDLLQQLSTGIQKTQTPLQRLEHILNTPVYFLIVPLFVLFNAGVHVELNNLNALLHSPVLKGVFFGLVFGKLIGVVSAIMICVKLKIAALPADATFKQVLGIGMLAGIGFTMSIFVSELAFSGQAQHLAEAKITILAASLTAATLGYCWLRFITGAAKAETGTSVSQ.

The next 12 helical transmembrane spans lie at 37–57, 82–102, 118–138, 145–165, 176–196, 200–220, 226–246, 248–268, 321–341, 360–380, 396–416, and 430–450; these read GSGI…NTSC, IHYW…GLEI, VLPI…YFSF, VSGW…ILLL, AVLV…IAIF, NLAW…LLLN, ALWA…FSGV, ATVA…YSPT, ILNT…NAGV, VFFG…MICV, VLGI…VSEL, and ITIL…LRFI.

Belongs to the NhaA Na(+)/H(+) (TC 2.A.33) antiporter family.

The protein localises to the cell inner membrane. The catalysed reaction is Na(+)(in) + 2 H(+)(out) = Na(+)(out) + 2 H(+)(in). In terms of biological role, na(+)/H(+) antiporter that extrudes sodium in exchange for external protons. The protein is Na(+)/H(+) antiporter NhaA of Dichelobacter nodosus (strain VCS1703A).